Here is a 295-residue protein sequence, read N- to C-terminus: Protoheme IX farnesyltransferase 2 (295 aa).

Transmembrane regions (helical) follow at residues 9–29, 36–56, 83–103, 108–128, 135–155, 163–183, 209–229, 230–250, and 264–284; these read ITKPGIIFGNVLSVAGGFFLA, FALFLAVVIGTSLVVASGCVF, LPLALIYATLLGVAGFSLLYV, LSAFCALIGFVVYVGFYSLWL, GTLVGSLSGAMPPVIGYCAVS, VTLLVMFSLWQMPHSFAIAIF, IVLYVLAFVLATLMLTLGGYA, GLGYLAVAAAMGLYWLYMAWG, and VFGFSILTVTALSVMMGVDSQ.

This sequence belongs to the UbiA prenyltransferase family. Protoheme IX farnesyltransferase subfamily.

It localises to the cell inner membrane. The enzyme catalyses heme b + (2E,6E)-farnesyl diphosphate + H2O = Fe(II)-heme o + diphosphate. It functions in the pathway porphyrin-containing compound metabolism; heme O biosynthesis; heme O from protoheme: step 1/1. In terms of biological role, converts heme B (protoheme IX) to heme O by substitution of the vinyl group on carbon 2 of heme B porphyrin ring with a hydroxyethyl farnesyl side group. The chain is Protoheme IX farnesyltransferase 2 from Pseudomonas putida (strain ATCC 47054 / DSM 6125 / CFBP 8728 / NCIMB 11950 / KT2440).